Here is an 81-residue protein sequence, read N- to C-terminus: Cytochrome b559 subunit alpha (81 aa).

The chain crosses the membrane as a helical span at residues 21–35 (VIHSITIPMLFVAGW). His23 lines the heme pocket.

This sequence belongs to the PsbE/PsbF family. Heterodimer of an alpha subunit and a beta subunit. PSII is composed of 1 copy each of membrane proteins PsbA, PsbB, PsbC, PsbD, PsbE, PsbF, PsbH, PsbI, PsbJ, PsbK, PsbL, PsbM, PsbT, PsbX, PsbY, PsbZ, Psb30/Ycf12, peripheral proteins PsbO, CyanoQ (PsbQ), PsbU, PsbV and a large number of cofactors. It forms dimeric complexes. Requires heme b as cofactor.

It is found in the cellular thylakoid membrane. Its function is as follows. This b-type cytochrome is tightly associated with the reaction center of photosystem II (PSII). PSII is a light-driven water:plastoquinone oxidoreductase that uses light energy to abstract electrons from H(2)O, generating O(2) and a proton gradient subsequently used for ATP formation. It consists of a core antenna complex that captures photons, and an electron transfer chain that converts photonic excitation into a charge separation. The sequence is that of Cytochrome b559 subunit alpha from Gloeothece citriformis (strain PCC 7424) (Cyanothece sp. (strain PCC 7424)).